The following is a 947-amino-acid chain: ATP-dependent RNA helicase DDX42 (947 aa).

Gly residues predominate over residues Met-1–Gly-18. Disordered regions lie at residues Met-1–Pro-54, Glu-68–Ala-114, and Asn-176–Ile-200. Residues Val-34 to Pro-54 show a composition bias toward polar residues. A compositionally biased stretch (acidic residues) spans Glu-68–Ser-81. The stretch at Leu-112–Asp-152 forms a coiled coil. The Q motif motif lies at Ser-250–Cys-278. A Helicase ATP-binding domain is found at Ile-281–Val-456. Ala-294–Thr-301 is an ATP binding site. The DEAD box motif lies at Asp-404–Asp-407. The region spanning Trp-484–Ala-629 is the Helicase C-terminal domain. 2 disordered regions span residues Ser-731–Pro-754 and Gly-797–Ser-947. The segment covering Gly-805–Thr-929 has biased composition (basic and acidic residues). A compositionally biased stretch (basic residues) spans Pro-938 to Ser-947.

It belongs to the DEAD box helicase family. DDX42 subfamily. Transient component of the SF3B subcomplex of the 17S U2 SnRNP complex.

The protein localises to the cytoplasm. The protein resides in the nucleus. The catalysed reaction is ATP + H2O = ADP + phosphate + H(+). In terms of biological role, ATP-dependent RNA helicase that binds to partially double-stranded RNAs (dsRNAs) in order to unwind RNA secondary structures. Unwinding is promoted in the presence of single-strand binding proteins. Also mediates RNA duplex formation thereby displacing the single-strand RNA binding protein. ATP and ADP modulate its activity: ATP binding and hydrolysis by DDX42 triggers RNA strand separation, whereas the ADP-bound form of the protein triggers annealing of complementary RNA strands. Required for assembly of the 17S U2 SnRNP complex of the spliceosome, a large ribonucleoprotein complex that removes introns from transcribed pre-mRNAs: DDX42 associates transiently with the SF3B subcomplex of the 17S U2 SnRNP complex and is released after fulfilling its role in the assembly of 17S U2 SnRNP. The chain is ATP-dependent RNA helicase DDX42 (ddx42) from Xenopus laevis (African clawed frog).